A 300-amino-acid chain; its full sequence is 4-hydroxy-tetrahydrodipicolinate synthase (300 aa).

A pyruvate-binding site is contributed by Thr55. Tyr143 functions as the Proton donor/acceptor in the catalytic mechanism. The active-site Schiff-base intermediate with substrate is Lys171. Ile211 is a binding site for pyruvate.

Belongs to the DapA family. In terms of assembly, homotetramer; dimer of dimers.

The protein localises to the cytoplasm. The catalysed reaction is L-aspartate 4-semialdehyde + pyruvate = (2S,4S)-4-hydroxy-2,3,4,5-tetrahydrodipicolinate + H2O + H(+). Its pathway is amino-acid biosynthesis; L-lysine biosynthesis via DAP pathway; (S)-tetrahydrodipicolinate from L-aspartate: step 3/4. Functionally, catalyzes the condensation of (S)-aspartate-beta-semialdehyde [(S)-ASA] and pyruvate to 4-hydroxy-tetrahydrodipicolinate (HTPA). This chain is 4-hydroxy-tetrahydrodipicolinate synthase, found in Mycobacterium leprae (strain Br4923).